A 179-amino-acid polypeptide reads, in one-letter code: Peptide deformylase (179 aa).

The Fe cation site is built by Cys102 and His144. Glu145 is an active-site residue. His148 is a binding site for Fe cation.

It belongs to the polypeptide deformylase family. Fe(2+) serves as cofactor.

The enzyme catalyses N-terminal N-formyl-L-methionyl-[peptide] + H2O = N-terminal L-methionyl-[peptide] + formate. Its function is as follows. Removes the formyl group from the N-terminal Met of newly synthesized proteins. Requires at least a dipeptide for an efficient rate of reaction. N-terminal L-methionine is a prerequisite for activity but the enzyme has broad specificity at other positions. The polypeptide is Peptide deformylase (Wolbachia pipientis subsp. Culex pipiens (strain wPip)).